Consider the following 197-residue polypeptide: Probable low-affinity putrescine importer PlaP (197 aa).

5 consecutive transmembrane segments (helical) span residues 33–53, 85–105, 107–127, 140–160, and 163–183; these read GVLI…HAGV, VLLV…TATA, INLG…SQFW, FNYL…WINL, and SSMV…ACVT.

The protein belongs to the amino acid-polyamine-organocation (APC) superfamily.

It localises to the cell inner membrane. The catalysed reaction is putrescine(in) + H(+)(in) = putrescine(out) + H(+)(out). In terms of biological role, putrescine importer. The protein is Probable low-affinity putrescine importer PlaP (plaP) of Klebsiella pneumoniae.